The sequence spans 378 residues: GTP cyclohydrolase-2 (378 aa).

The tract at residues 1–180 (MEEVSSHVKS…IKDMIEFRIK (180 aa)) is DHBP synthase-like. The interval 181-378 (SEKIVERVIE…KMGHLICFND (198 aa)) is GTP cyclohydrolase II. 229 to 233 (RIHSE) provides a ligand contact to GTP. Cysteine 234, cysteine 245, and cysteine 247 together coordinate Zn(2+). GTP is bound by residues glutamine 250, 273–275 (EGR), and threonine 295. Aspartate 307 functions as the Proton acceptor in the catalytic mechanism. Arginine 309 serves as the catalytic Nucleophile. Residues threonine 330 and lysine 335 each contribute to the GTP site.

It in the N-terminal section; belongs to the DHBP synthase family. In the C-terminal section; belongs to the GTP cyclohydrolase II family. Requires Zn(2+) as cofactor.

The enzyme catalyses GTP + 4 H2O = 2,5-diamino-6-hydroxy-4-(5-phosphoribosylamino)-pyrimidine + formate + 2 phosphate + 3 H(+). It functions in the pathway cofactor biosynthesis; riboflavin biosynthesis; 5-amino-6-(D-ribitylamino)uracil from GTP: step 1/4. Functionally, catalyzes the conversion of GTP to 2,5-diamino-6-ribosylamino-4(3H)-pyrimidinone 5'-phosphate (DARP), formate and pyrophosphate. The sequence is that of GTP cyclohydrolase-2 (ribA) from Archaeoglobus fulgidus (strain ATCC 49558 / DSM 4304 / JCM 9628 / NBRC 100126 / VC-16).